Reading from the N-terminus, the 406-residue chain is Imidazolonepropionase (406 aa).

Positions 74 and 76 each coordinate Fe(3+). Positions 74 and 76 each coordinate Zn(2+). Positions 83, 146, and 179 each coordinate 4-imidazolone-5-propanoate. Tyr146 contributes to the N-formimidoyl-L-glutamate binding site. Position 240 (His240) interacts with Fe(3+). Position 240 (His240) interacts with Zn(2+). Glu243 is a binding site for 4-imidazolone-5-propanoate. Residue Asp314 participates in Fe(3+) binding. Asp314 lines the Zn(2+) pocket. Residues Asn316 and Gly318 each coordinate N-formimidoyl-L-glutamate. Ser319 serves as a coordination point for 4-imidazolone-5-propanoate.

The protein belongs to the metallo-dependent hydrolases superfamily. HutI family. Requires Zn(2+) as cofactor. The cofactor is Fe(3+).

It is found in the cytoplasm. It catalyses the reaction 4-imidazolone-5-propanoate + H2O = N-formimidoyl-L-glutamate. It participates in amino-acid degradation; L-histidine degradation into L-glutamate; N-formimidoyl-L-glutamate from L-histidine: step 3/3. Its function is as follows. Catalyzes the hydrolytic cleavage of the carbon-nitrogen bond in imidazolone-5-propanoate to yield N-formimidoyl-L-glutamate. It is the third step in the universal histidine degradation pathway. This is Imidazolonepropionase from Kosmotoga olearia (strain ATCC BAA-1733 / DSM 21960 / TBF 19.5.1).